The following is a 313-amino-acid chain: Desiccation-related protein PCC13-62 (313 aa).

Residues 1–26 (MAQQPTFASAALVSFFLALICSCSYA) form the signal peptide.

This chain is Desiccation-related protein PCC13-62, found in Craterostigma plantagineum (Blue gem).